Here is a 158-residue protein sequence, read N- to C-terminus: Transcription factor BTF3 homolog 4 (158 aa).

K5 is modified (N6-methyllysine). One can recognise an NAC-A/B domain in the interval 33-98 (TADDKKLQSS…AEAKPITEML (66 aa)). Position 111 is a phosphothreonine (T111). A disordered region spans residues 122–158 (RQVLDSKAPKPEDIDEEDDDVPDLVENFDEASKNEAN). The segment covering 134–150 (DIDEEDDDVPDLVENFD) has biased composition (acidic residues).

This sequence belongs to the NAC-beta family.

In Homo sapiens (Human), this protein is Transcription factor BTF3 homolog 4 (BTF3L4).